A 411-amino-acid polypeptide reads, in one-letter code: Flavohemoprotein (411 aa).

The Globin domain maps to 5-142; the sequence is TLSQETKQIV…IADVFIQVEK (138 aa). His-89 serves as a coordination point for heme b. Catalysis depends on charge relay system residues Tyr-99 and Glu-141. The interval 153–411 is reductase; sequence GGWREFRSFV…FGPAGTLASS (259 aa). An FAD-binding FR-type domain is found at 156 to 267; sequence REFRSFVVEK…TAPAGDFTLQ (112 aa). FAD contacts are provided by residues Tyr-194 and 210-213; that span reads RQYS. NADP(+) is bound at residue 280-285; sequence GVGITP. FAD is bound at residue 401-404; it reads FFGP.

This sequence belongs to the globin family. Two-domain flavohemoproteins subfamily. It in the C-terminal section; belongs to the flavoprotein pyridine nucleotide cytochrome reductase family. Heme b serves as cofactor. The cofactor is FAD.

It catalyses the reaction 2 nitric oxide + NADPH + 2 O2 = 2 nitrate + NADP(+) + H(+). The catalysed reaction is 2 nitric oxide + NADH + 2 O2 = 2 nitrate + NAD(+) + H(+). In terms of biological role, is involved in NO detoxification in an aerobic process, termed nitric oxide dioxygenase (NOD) reaction that utilizes O(2) and NAD(P)H to convert NO to nitrate, which protects the bacterium from various noxious nitrogen compounds. Therefore, plays a central role in the inducible response to nitrosative stress. The protein is Flavohemoprotein of Halalkalibacterium halodurans (strain ATCC BAA-125 / DSM 18197 / FERM 7344 / JCM 9153 / C-125) (Bacillus halodurans).